Here is a 149-residue protein sequence, read N- to C-terminus: Deoxyuridine 5'-triphosphate nucleotidohydrolase (149 aa).

Residues 68-70 (RSG), Asn-81, 85-87 (LID), and Met-95 each bind substrate.

This sequence belongs to the dUTPase family. Mg(2+) is required as a cofactor.

It carries out the reaction dUTP + H2O = dUMP + diphosphate + H(+). The protein operates within pyrimidine metabolism; dUMP biosynthesis; dUMP from dCTP (dUTP route): step 2/2. Its function is as follows. This enzyme is involved in nucleotide metabolism: it produces dUMP, the immediate precursor of thymidine nucleotides and it decreases the intracellular concentration of dUTP so that uracil cannot be incorporated into DNA. This Bordetella pertussis (strain Tohama I / ATCC BAA-589 / NCTC 13251) protein is Deoxyuridine 5'-triphosphate nucleotidohydrolase.